A 275-amino-acid polypeptide reads, in one-letter code: NH(3)-dependent NAD(+) synthetase (275 aa).

Position 46–53 (46–53 (GISGGQDS)) interacts with ATP. A Mg(2+)-binding site is contributed by aspartate 52. Residue arginine 140 participates in deamido-NAD(+) binding. ATP is bound at residue threonine 160. Glutamate 165 serves as a coordination point for Mg(2+). Lysine 173 and aspartate 180 together coordinate deamido-NAD(+). The ATP site is built by lysine 189 and threonine 211. 260–261 (HK) lines the deamido-NAD(+) pocket.

It belongs to the NAD synthetase family. Homodimer.

The enzyme catalyses deamido-NAD(+) + NH4(+) + ATP = AMP + diphosphate + NAD(+) + H(+). It functions in the pathway cofactor biosynthesis; NAD(+) biosynthesis; NAD(+) from deamido-NAD(+) (ammonia route): step 1/1. Catalyzes the ATP-dependent amidation of deamido-NAD to form NAD. Uses ammonia as a nitrogen source. The sequence is that of NH(3)-dependent NAD(+) synthetase from Salmonella dublin (strain CT_02021853).